The following is a 434-amino-acid chain: Chaperone SurA (434 aa).

An N-terminal signal peptide occupies residues 1–22; that stretch reads MKHSKKIIFALLALAMSNTSMA. 2 PpiC domains span residues 173-274 and 283-383; these read DVEF…KVVD and VEEV…QLES.

It localises to the periplasm. It carries out the reaction [protein]-peptidylproline (omega=180) = [protein]-peptidylproline (omega=0). Chaperone involved in the correct folding and assembly of outer membrane proteins. Recognizes specific patterns of aromatic residues and the orientation of their side chains, which are found more frequently in integral outer membrane proteins. May act in both early periplasmic and late outer membrane-associated steps of protein maturation. The polypeptide is Chaperone SurA (Shewanella frigidimarina (strain NCIMB 400)).